Reading from the N-terminus, the 206-residue chain is Anti-sigma-W factor RsiW (206 aa).

At 1–87 (MSCPEHIVQL…ASINRWLKAH (87 aa)) the chain is on the cytoplasmic side. Positions 30, 34, and 37 each coordinate Zn(2+). Residues 88-108 (PFLVAAALFAILMGGSFFSSW) traverse the membrane as a helical segment. The Extracellular segment spans residues 109–206 (KNDHDFSVSS…SVFGVKESKE (98 aa)).

It belongs to the zinc-associated anti-sigma factor (ZAS) superfamily. Anti-sigma-W factor family. The cofactor is Zn(2+). In terms of processing, is processed by three successive proteolytic events. First, the extracellular region of RsiW is cleaved by PrsW (Site-1 cleavage) in response to cell envelope stresses. Next, it undergoes cleavage at an intramembrane site (Site-2 cleavage) mediated by RasP. This cleavage uncovers a cryptic proteolytic tag with conserved alanine residues in the transmembrane segment, that is recognized mainly by the ClpXP protease, which completely degrades the protein in the cytoplasm and leads to the induction of the sigma-W-controlled genes.

The protein resides in the membrane. Its function is as follows. Is the anti-sigma factor for SigW. The presence of RsiW leads to the inactivation of SigW, and its proteolytic destruction to sigma-W activation. The protein is Anti-sigma-W factor RsiW (rsiW) of Bacillus licheniformis (strain ATCC 14580 / DSM 13 / JCM 2505 / CCUG 7422 / NBRC 12200 / NCIMB 9375 / NCTC 10341 / NRRL NRS-1264 / Gibson 46).